The sequence spans 541 residues: MAKTIAYDEEARRGLERGLNSLADAVKVTLGPKGRNVVLEKKWGAPTITNDGVSIAKEIELEDPYEKIGAELVKEVAKKTDDVAGDGTTTATVLAQALVKEGLRNVAAGANPLGLKRGIEKAVDKVTETLLKDAKEVETKEQIAATAAISAGDQSIGDLIAEAMDKVGNEGVITVEESNTFGLQLELTEGMRFDKGYISGYFVTDAERQEAVLEEPYILLVSSKVSTVKDLLPLLEKVIQAGKSLLIIAEDVEGEALSTLVVNKIRGTFKSVAVKAPGFGDRRKAMLQDMAILTGAQVISEEVGLTLENTDLSLLGKARKVVMTKDETTIVEGAGDTDAIAGRVAQIRTEIENSDSDYDREKLQERLAKLAGGVAVIKAGAATEVELKERKHRIEDAVRNAKAAVEEGIVAGGGVTLLQAAPALDKLKLTGDEATGANIVKVALEAPLKQIAFNSGMEPGVVAEKVRNLSVGHGLNAATGEYEDLLKAGVADPVKVTRSALQNAASIAGLFLTTEAVVADKPEKTAAPASDPTGGMGGMDF.

ATP is bound by residues 29-32 (TLGP), 86-90 (DGTTT), glycine 413, 476-478 (NAA), and aspartate 492.

Belongs to the chaperonin (HSP60) family. As to quaternary structure, forms a cylinder of 14 subunits composed of two heptameric rings stacked back-to-back. Interacts with the co-chaperonin GroES.

The protein localises to the secreted. The protein resides in the capsule. It localises to the cell surface. It is found in the cell wall. The enzyme catalyses ATP + H2O + a folded polypeptide = ADP + phosphate + an unfolded polypeptide.. Functionally, together with its co-chaperonin GroES, plays an essential role in assisting protein folding. The GroEL-GroES system forms a nano-cage that allows encapsulation of the non-native substrate proteins and provides a physical environment optimized to promote and accelerate protein folding. This is Chaperonin GroEL 2 from Mycobacterium leprae (strain TN).